The sequence spans 890 residues: Translation initiation factor IF-2 (890 aa).

A disordered region spans residues 45–304 (LIDHLNQKNS…LQQGFQKPAQ (260 aa)). Polar residues predominate over residues 67–81 (STLNIPGTGGKSKSV). Residues 92–217 (VKRDPQEAER…RMAEENKWTD (126 aa)) show a composition bias toward basic and acidic residues. Basic residues predominate over residues 252-266 (GRGRNAKAARPKKGN). Residues 267-280 (KHAESKADREEARA) show a composition bias toward basic and acidic residues. The tr-type G domain occupies 389–558 (PRAPVVTIMG…LLQAEVLELK (170 aa)). The interval 398-405 (GHVDHGKT) is G1. 398–405 (GHVDHGKT) serves as a coordination point for GTP. The segment at 423–427 (GITQH) is G2. The tract at residues 444 to 447 (DTPG) is G3. GTP contacts are provided by residues 444–448 (DTPGH) and 498–501 (NKID). The segment at 498 to 501 (NKID) is G4. The G5 stretch occupies residues 534–536 (SAK). Residue K808 is modified to N6-acetyllysine.

It belongs to the TRAFAC class translation factor GTPase superfamily. Classic translation factor GTPase family. IF-2 subfamily.

The protein localises to the cytoplasm. Functionally, one of the essential components for the initiation of protein synthesis. Protects formylmethionyl-tRNA from spontaneous hydrolysis and promotes its binding to the 30S ribosomal subunits. Also involved in the hydrolysis of GTP during the formation of the 70S ribosomal complex. The chain is Translation initiation factor IF-2 from Escherichia coli (strain 55989 / EAEC).